Here is a 208-residue protein sequence, read N- to C-terminus: Bacitracin transport permease protein BCRB (208 aa).

The next 6 membrane-spanning stretches (helical) occupy residues 23-43 (LYIV…YLFN), 70-90 (VLLL…TLLF), 111-131 (FMIG…VTLL), 135-155 (YVPT…VYGT), 159-179 (ALFP…PEYP), and 182-202 (YSFI…IVYF).

The protein localises to the cell membrane. Its function is as follows. Part of the binding-protein-dependent transport system for bacitracin that confer resistance to this antibiotic; probably responsible for the translocation of the substrate across the membrane. In Bacillus licheniformis, this protein is Bacitracin transport permease protein BCRB (bcrB).